A 360-amino-acid chain; its full sequence is Histidinol-phosphate aminotransferase (360 aa).

An N6-(pyridoxal phosphate)lysine modification is found at K208.

The protein belongs to the class-II pyridoxal-phosphate-dependent aminotransferase family. Histidinol-phosphate aminotransferase subfamily. In terms of assembly, homodimer. Pyridoxal 5'-phosphate is required as a cofactor.

The enzyme catalyses L-histidinol phosphate + 2-oxoglutarate = 3-(imidazol-4-yl)-2-oxopropyl phosphate + L-glutamate. Its pathway is amino-acid biosynthesis; L-histidine biosynthesis; L-histidine from 5-phospho-alpha-D-ribose 1-diphosphate: step 7/9. The polypeptide is Histidinol-phosphate aminotransferase (hisC) (Lactococcus lactis subsp. lactis (strain IL1403) (Streptococcus lactis)).